A 213-amino-acid polypeptide reads, in one-letter code: Thymidylate kinase (213 aa).

An ATP-binding site is contributed by 10–17 (GLEGAGKT).

This sequence belongs to the thymidylate kinase family.

The catalysed reaction is dTMP + ATP = dTDP + ADP. Its function is as follows. Phosphorylation of dTMP to form dTDP in both de novo and salvage pathways of dTTP synthesis. This Enterobacter sp. (strain 638) protein is Thymidylate kinase.